Consider the following 533-residue polypeptide: Beta-glucosidase 22 (533 aa).

The first 24 residues, 1-24, serve as a signal peptide directing secretion; sequence MAVSSSTSTCSSFSLLLLLLLLAA. A glycan (N-linked (GlcNAc...) asparagine) is linked at Asn-41. A beta-D-glucoside is bound by residues Gln-61, His-161, and 206–207; that span reads DE. Catalysis depends on Glu-207, which acts as the Proton donor. An intrachain disulfide couples Cys-226 to Cys-234. 2 N-linked (GlcNAc...) asparagine glycosylation sites follow: Asn-233 and Asn-238. A beta-D-glucoside contacts are provided by Tyr-350 and Glu-421. Catalysis depends on Glu-421, which acts as the Nucleophile. A glycan (N-linked (GlcNAc...) asparagine) is linked at Asn-435. 2 residues coordinate a beta-D-glucoside: Trp-466 and Phe-482.

This sequence belongs to the glycosyl hydrolase 1 family.

It catalyses the reaction Hydrolysis of terminal, non-reducing beta-D-glucosyl residues with release of beta-D-glucose.. This is Beta-glucosidase 22 (BGLU22) from Oryza sativa subsp. japonica (Rice).